A 401-amino-acid chain; its full sequence is L-threonine ammonia-lyase (401 aa).

Position 51 is an N6-(pyridoxal phosphate)lysine (lysine 51). Pyridoxal 5'-phosphate is bound by residues asparagine 78, 178 to 181 (GGGL), and serine 301. An ACT domain is found at 326 to 401 (FIETFVMDRP…AKGYEVRIVG (76 aa)).

The protein belongs to the serine/threonine dehydratase family. As to quaternary structure, homotetramer. Pyridoxal 5'-phosphate is required as a cofactor.

It carries out the reaction L-threonine = 2-oxobutanoate + NH4(+). It catalyses the reaction L-serine = pyruvate + NH4(+). Its pathway is amino-acid biosynthesis; L-isoleucine biosynthesis; 2-oxobutanoate from L-threonine: step 1/1. With respect to regulation, activity is insensitive to allosteric regulators L-valine and L-isoleucine at low concentrations, while these L-amino acids are inhibitors at high concentrations. Is insensitive to ammonium chloride and AMP. Inhibited in the presence of aminoxyacetic acid (AOAA), an inhibitor of pyridoxal phosphate-dependent enzymes. In terms of biological role, catalyzes the conversion of L-threonine to 2-oxobutanoate and ammonia. Can also use L-serine, but the catalytic efficiency toward L-threonine is about sixfold higher than that toward L-serine. Also shows weak activity toward L-allo-threonine, but cannot use the corresponding D-amino acids. Does not exhibit racemase activity toward various amino acids, including serine. Physiologically, is likely involved in the threonine-dependent pathway of isoleucine biosynthesis. This Thermotoga maritima (strain ATCC 43589 / DSM 3109 / JCM 10099 / NBRC 100826 / MSB8) protein is L-threonine ammonia-lyase.